Here is a 111-residue protein sequence, read N- to C-terminus: Prostatic steroid-binding protein C1 (111 aa).

Residues 1 to 23 (MSTIKLSLCLLIMLAVCCYEANA) form the signal peptide.

The protein belongs to the secretoglobin family. Lipophilin subfamily. In terms of assembly, prostatein is composed of three different peptides called C1, C2 and C3. These form covalent C1:C3 (F) and C2:C3 (S) heterodimers whose noncovalent association forms tetrameric (C1:C3/C3:C2) prostatein molecules.

The protein localises to the secreted. In terms of biological role, part of prostatein which is the major secretory glycoprotein of ventral prostate gland. The sequence is that of Prostatic steroid-binding protein C1 (Psbpc1) from Rattus norvegicus (Rat).